The chain runs to 169 residues: Shikimate kinase (169 aa).

13–18 (GAGKST) serves as a coordination point for ATP. Ser17 contacts Mg(2+). 3 residues coordinate substrate: Asp35, Arg59, and Gly80. Residue Arg117 participates in ATP binding. Arg136 lines the substrate pocket. Residue Arg153 participates in ATP binding.

It belongs to the shikimate kinase family. In terms of assembly, monomer. Requires Mg(2+) as cofactor.

It is found in the cytoplasm. It carries out the reaction shikimate + ATP = 3-phosphoshikimate + ADP + H(+). It participates in metabolic intermediate biosynthesis; chorismate biosynthesis; chorismate from D-erythrose 4-phosphate and phosphoenolpyruvate: step 5/7. In terms of biological role, catalyzes the specific phosphorylation of the 3-hydroxyl group of shikimic acid using ATP as a cosubstrate. The sequence is that of Shikimate kinase from Corynebacterium efficiens (strain DSM 44549 / YS-314 / AJ 12310 / JCM 11189 / NBRC 100395).